The primary structure comprises 202 residues: Small ribosomal subunit protein uS4 (202 aa).

Residues 91 to 157 (CRLDNVVYRA…TPFIVARETH (67 aa)) enclose the S4 RNA-binding domain.

This sequence belongs to the universal ribosomal protein uS4 family. Part of the 30S ribosomal subunit. Contacts protein S5. The interaction surface between S4 and S5 is involved in control of translational fidelity.

Its function is as follows. One of the primary rRNA binding proteins, it binds directly to 16S rRNA where it nucleates assembly of the body of the 30S subunit. With S5 and S12 plays an important role in translational accuracy. The protein is Small ribosomal subunit protein uS4 of Nocardioides sp. (strain ATCC BAA-499 / JS614).